A 439-amino-acid polypeptide reads, in one-letter code: Structure-specific endonuclease subunit SLX1 homolog (439 aa).

Disordered stretches follow at residues 1-28 and 117-140; these read METF…GVPK and DDDD…LRAL. Basic and acidic residues predominate over residues 125 to 136; the sequence is ESSTEHADDDLN. Residues 166-253 form the GIY-YIG domain; sequence EFYGVYCLIS…PAVSKSLKEK (88 aa). The segment at 335 to 390 adopts an SLX1-type zinc-finger fold; it reads CRLCGKDIEKLWGLVRCISQSCHSHFHSKCLAEHGLKNKNEYADQIYPLKSNCPIC.

Belongs to the SLX1 family. In terms of assembly, forms a heterodimer with him-18/slx-4. It depends on a divalent metal cation as a cofactor.

It is found in the nucleus. Its function is as follows. Catalytic subunit of a heterodimeric structure-specific endonuclease that resolves DNA secondary structures generated during DNA repair and recombination. Has endonuclease activity towards branched DNA substrates, introducing single-strand cuts in duplex DNA close to junctions with ss-DNA (Potential). Has a preference for replication forks over 5' flap structures or Holliday junctions and shows much lower activity toward 3' flap structures. Required for proper crossover distribution through inhibition of crossover formation at the central region of chromosomes. This Caenorhabditis briggsae protein is Structure-specific endonuclease subunit SLX1 homolog.